Reading from the N-terminus, the 311-residue chain is Porphobilinogen deaminase (311 aa).

An S-(dipyrrolylmethanemethyl)cysteine modification is found at cysteine 241.

Belongs to the HMBS family. As to quaternary structure, monomer. The cofactor is dipyrromethane.

The enzyme catalyses 4 porphobilinogen + H2O = hydroxymethylbilane + 4 NH4(+). It participates in porphyrin-containing compound metabolism; protoporphyrin-IX biosynthesis; coproporphyrinogen-III from 5-aminolevulinate: step 2/4. In terms of biological role, tetrapolymerization of the monopyrrole PBG into the hydroxymethylbilane pre-uroporphyrinogen in several discrete steps. This is Porphobilinogen deaminase from Geobacillus sp. (strain WCH70).